The primary structure comprises 342 residues: MVTVRKRNVKVFTFAFVLITVTSFLLNYKHQVTMTTWDPKHIISQFSEQVRKLIKFPRRPCSCSTCISELGHSLWFDQRFNSTMQPFLTSQNALIPEDSYRWWLKLQGEKSPKNINDTLKELFGIIPGDRDPLQERGTFSCRRCAVVGNSGNLRQSQYGQDIDSHDFVLRMNRAPTIGYESDVGSKTTHHFVYPESYKELAENVSMIVIPFKTLDLRWIVTALTTGTINFTYVPVPRKIKVRKEKVLIYNPSFIKYVYENWLQNHGRYPSTGLLSVIFALHVCDEVNVYGFGADSKGHWHHYWENNASAGAFRQTGVHDGDFEFNVTLTLASIEKIKFFKGR.

Residues 1 to 10 (MVTVRKRNVK) are Cytoplasmic-facing. A helical; Signal-anchor for type II membrane protein transmembrane segment spans residues 11–28 (VFTFAFVLITVTSFLLNY). Residues 29–342 (KHQVTMTTWD…IEKIKFFKGR (314 aa)) are Lumenal-facing. Intrachain disulfides connect C61/C66, C63/C141, and C144/C283. Residue N81 is glycosylated (N-linked (GlcNAc...) asparagine). Q107 serves as a coordination point for substrate. N-linked (GlcNAc...) asparagine glycosylation is present at N116. The substrate site is built by N149 and N172. Residues N203 and N229 are each glycosylated (N-linked (GlcNAc...) asparagine). Residues Y232, Y268, G272, G292, and H301 each contribute to the substrate site. N306 carries an N-linked (GlcNAc...) asparagine glycan. H318 provides a ligand contact to substrate. N325 carries N-linked (GlcNAc...) asparagine glycosylation.

The protein belongs to the glycosyltransferase 29 family. In terms of processing, the soluble form derives from the membrane form by proteolytic processing.

The protein resides in the golgi apparatus. It localises to the golgi stack membrane. The protein localises to the secreted. The catalysed reaction is a beta-D-galactosyl-(1-&gt;3)-N-acetyl-alpha-D-galactosaminyl derivative + CMP-N-acetyl-beta-neuraminate = an N-acetyl-alpha-neuraminyl-(2-&gt;3)-beta-D-galactosyl-(1-&gt;3)-N-acetyl-alpha-D-galactosaminyl derivative + CMP + H(+). It functions in the pathway protein modification; protein glycosylation. Functionally, responsible for the synthesis of the sequence NeuAc-alpha-2,3-Gal-beta-1,3-GalNAc- found on sugar chains O-linked to Thr or Ser and also as a terminal sequence on certain gangliosides. SIAT4A and SIAT4B sialylate the same acceptor substrates but exhibit different Km values. The chain is CMP-N-acetylneuraminate-beta-galactosamide-alpha-2,3-sialyltransferase 1 (ST3GAL1) from Gallus gallus (Chicken).